The chain runs to 524 residues: Leucine-rich repeat-containing protein 1 (524 aa).

17 LRR repeats span residues Asn-11–Tyr-34, Ala-35–Leu-58, Lys-60–Phe-81, Gln-83–Lys-105, Leu-107–Glu-126, Leu-127–Asn-149, Leu-150–Gln-172, Leu-173–Leu-196, His-198–Asn-218, Leu-219–Leu-242, Ser-244–Lys-264, Leu-265–Cys-288, Asn-290–Lys-310, Leu-311–Cys-334, Ser-336–Gln-356, Ala-357–Leu-380, and Leu-382–Ala-405. Positions Ser-456 to Glu-512 form a coiled coil. Residues Glu-464 to Glu-485 are disordered. At Thr-480 the chain carries Phosphothreonine.

As to quaternary structure, interacts with DLG1. May form a complex with DLG1 and ERBIN, where interaction between LRRC1 and ERBIN is indirect.

The protein resides in the cytoplasm. It is found in the membrane. The sequence is that of Leucine-rich repeat-containing protein 1 (Lrrc1) from Mus musculus (Mouse).